Reading from the N-terminus, the 222-residue chain is Small ribosomal subunit protein uS3 (222 aa).

Residues 38–106 (IRKFISEKLA…NVHINIVEIK (69 aa)) enclose the KH type-2 domain.

The protein belongs to the universal ribosomal protein uS3 family. In terms of assembly, part of the 30S ribosomal subunit. Forms a tight complex with proteins S10 and S14.

In terms of biological role, binds the lower part of the 30S subunit head. Binds mRNA in the 70S ribosome, positioning it for translation. The chain is Small ribosomal subunit protein uS3 from Lactobacillus gasseri (strain ATCC 33323 / DSM 20243 / BCRC 14619 / CIP 102991 / JCM 1131 / KCTC 3163 / NCIMB 11718 / NCTC 13722 / AM63).